A 122-amino-acid chain; its full sequence is Large ribosomal subunit protein bL12 (122 aa).

This sequence belongs to the bacterial ribosomal protein bL12 family. As to quaternary structure, homodimer. Part of the ribosomal stalk of the 50S ribosomal subunit. Forms a multimeric L10(L12)X complex, where L10 forms an elongated spine to which 2 to 4 L12 dimers bind in a sequential fashion. Binds GTP-bound translation factors.

Functionally, forms part of the ribosomal stalk which helps the ribosome interact with GTP-bound translation factors. Is thus essential for accurate translation. The protein is Large ribosomal subunit protein bL12 of Stutzerimonas stutzeri (strain A1501) (Pseudomonas stutzeri).